The following is a 208-amino-acid chain: Thymidylate kinase (208 aa).

7 to 14 (GIDGAGKT) contacts ATP.

The protein belongs to the thymidylate kinase family.

The enzyme catalyses dTMP + ATP = dTDP + ADP. Its function is as follows. Phosphorylation of dTMP to form dTDP in both de novo and salvage pathways of dTTP synthesis. This is Thymidylate kinase (tmk) from Xylella fastidiosa (strain 9a5c).